A 136-amino-acid polypeptide reads, in one-letter code: Small ribosomal subunit protein uS19 (136 aa).

It belongs to the universal ribosomal protein uS19 family.

Functionally, protein S19 forms a complex with S13 that binds strongly to the 16S ribosomal RNA. The chain is Small ribosomal subunit protein uS19 from Methanocorpusculum labreanum (strain ATCC 43576 / DSM 4855 / Z).